Reading from the N-terminus, the 326-residue chain is GTP 3',8-cyclase (326 aa).

The Radical SAM core domain occupies 4 to 227; that stretch reads KHERNINYMR…LTPQKNILGN (224 aa). Arg-13 is a binding site for GTP. [4Fe-4S] cluster is bound by residues Cys-20 and Cys-24. Tyr-26 lines the S-adenosyl-L-methionine pocket. Cys-27 is a binding site for [4Fe-4S] cluster. Residue Arg-63 coordinates GTP. Gly-67 is an S-adenosyl-L-methionine binding site. Residue Thr-94 coordinates GTP. Ser-118 contributes to the S-adenosyl-L-methionine binding site. Residue Lys-155 participates in GTP binding. Met-189 is an S-adenosyl-L-methionine binding site. [4Fe-4S] cluster is bound by residues Cys-253 and Cys-256. Residue 258 to 260 coordinates GTP; it reads RIR. Position 270 (Cys-270) interacts with [4Fe-4S] cluster.

Belongs to the radical SAM superfamily. MoaA family. Monomer and homodimer. It depends on [4Fe-4S] cluster as a cofactor.

The catalysed reaction is GTP + AH2 + S-adenosyl-L-methionine = (8S)-3',8-cyclo-7,8-dihydroguanosine 5'-triphosphate + 5'-deoxyadenosine + L-methionine + A + H(+). It functions in the pathway cofactor biosynthesis; molybdopterin biosynthesis. Functionally, catalyzes the cyclization of GTP to (8S)-3',8-cyclo-7,8-dihydroguanosine 5'-triphosphate. The sequence is that of GTP 3',8-cyclase from Syntrophomonas wolfei subsp. wolfei (strain DSM 2245B / Goettingen).